The primary structure comprises 525 residues: GMP synthase [glutamine-hydrolyzing] (525 aa).

A Glutamine amidotransferase type-1 domain is found at 8 to 207 (KILILDFGSQ…VMDICGCDNK (200 aa)). The Nucleophile role is filled by Cys-85. Active-site residues include His-181 and Glu-183. Residues 208 to 400 (WQPASIIEDA…LGLPYDMLYR (193 aa)) enclose the GMPS ATP-PPase domain. 235–241 (SGGVDSS) provides a ligand contact to ATP.

In terms of assembly, homodimer.

The enzyme catalyses XMP + L-glutamine + ATP + H2O = GMP + L-glutamate + AMP + diphosphate + 2 H(+). The protein operates within purine metabolism; GMP biosynthesis; GMP from XMP (L-Gln route): step 1/1. Catalyzes the synthesis of GMP from XMP. In Shewanella amazonensis (strain ATCC BAA-1098 / SB2B), this protein is GMP synthase [glutamine-hydrolyzing].